Here is a 285-residue protein sequence, read N- to C-terminus: Diphthine methyl ester synthase (285 aa).

S-adenosyl-L-methionine-binding positions include Leu-9, Asp-84, Gly-87, 112–113, Leu-163, Val-221, and His-246; that span reads SI.

This sequence belongs to the diphthine synthase family.

It is found in the cytoplasm. It carries out the reaction 2-[(3S)-amino-3-carboxypropyl]-L-histidyl-[translation elongation factor 2] + 4 S-adenosyl-L-methionine = diphthine methyl ester-[translation elongation factor 2] + 4 S-adenosyl-L-homocysteine + 3 H(+). Its pathway is protein modification; peptidyl-diphthamide biosynthesis. Functionally, S-adenosyl-L-methionine-dependent methyltransferase that catalyzes four methylations of the modified target histidine residue in translation elongation factor 2 (EF-2), to form an intermediate called diphthine methyl ester. The four successive methylation reactions represent the second step of diphthamide biosynthesis. This is Diphthine methyl ester synthase (dph5) from Aspergillus fumigatus (strain ATCC MYA-4609 / CBS 101355 / FGSC A1100 / Af293) (Neosartorya fumigata).